Reading from the N-terminus, the 745-residue chain is Phosphoribosylformylglycinamidine synthase subunit PurL (745 aa).

His47 is a catalytic residue. Residues Tyr50 and Lys90 each contribute to the ATP site. Glu92 serves as a coordination point for Mg(2+). Substrate-binding positions include Ser93–His96 and Arg115. Residue His94 is the Proton acceptor of the active site. Residue Asp116 coordinates Mg(2+). Substrate is bound at residue Gln240. Asp268 contacts Mg(2+). Residue Glu312 to Gln314 participates in substrate binding. Residues Asn501 and Gly538 each contribute to the ATP site. Asn539 lines the Mg(2+) pocket. Residue Ser541 coordinates substrate.

Belongs to the FGAMS family. As to quaternary structure, monomer. Part of the FGAM synthase complex composed of 1 PurL, 1 PurQ and 2 PurS subunits.

It is found in the cytoplasm. The catalysed reaction is N(2)-formyl-N(1)-(5-phospho-beta-D-ribosyl)glycinamide + L-glutamine + ATP + H2O = 2-formamido-N(1)-(5-O-phospho-beta-D-ribosyl)acetamidine + L-glutamate + ADP + phosphate + H(+). It participates in purine metabolism; IMP biosynthesis via de novo pathway; 5-amino-1-(5-phospho-D-ribosyl)imidazole from N(2)-formyl-N(1)-(5-phospho-D-ribosyl)glycinamide: step 1/2. Its function is as follows. Part of the phosphoribosylformylglycinamidine synthase complex involved in the purines biosynthetic pathway. Catalyzes the ATP-dependent conversion of formylglycinamide ribonucleotide (FGAR) and glutamine to yield formylglycinamidine ribonucleotide (FGAM) and glutamate. The FGAM synthase complex is composed of three subunits. PurQ produces an ammonia molecule by converting glutamine to glutamate. PurL transfers the ammonia molecule to FGAR to form FGAM in an ATP-dependent manner. PurS interacts with PurQ and PurL and is thought to assist in the transfer of the ammonia molecule from PurQ to PurL. The sequence is that of Phosphoribosylformylglycinamidine synthase subunit PurL from Leptospira interrogans serogroup Icterohaemorrhagiae serovar copenhageni (strain Fiocruz L1-130).